A 231-amino-acid chain; its full sequence is Cytidylate kinase (231 aa).

16–24 (GPAASGKST) contacts ATP. The segment at 176-205 (PDLDSLEQEITKRDRDDAEREHAPLKKHPE) is disordered. Over residues 184–205 (EITKRDRDDAEREHAPLKKHPE) the composition is skewed to basic and acidic residues.

The protein belongs to the cytidylate kinase family. Type 1 subfamily.

It is found in the cytoplasm. It carries out the reaction CMP + ATP = CDP + ADP. The enzyme catalyses dCMP + ATP = dCDP + ADP. This Pelodictyon phaeoclathratiforme (strain DSM 5477 / BU-1) protein is Cytidylate kinase.